A 262-amino-acid polypeptide reads, in one-letter code: Type III pantothenate kinase (262 aa).

9 to 16 serves as a coordination point for ATP; sequence DIGNTNVK. Substrate-binding positions include Tyr103 and 110 to 113; that span reads GADR. Catalysis depends on Asp112, which acts as the Proton acceptor. Asp134 contributes to the K(+) binding site. Thr137 is a binding site for ATP. Thr190 is a binding site for substrate.

It belongs to the type III pantothenate kinase family. In terms of assembly, homodimer. It depends on NH4(+) as a cofactor. K(+) is required as a cofactor.

The protein resides in the cytoplasm. It catalyses the reaction (R)-pantothenate + ATP = (R)-4'-phosphopantothenate + ADP + H(+). Its pathway is cofactor biosynthesis; coenzyme A biosynthesis; CoA from (R)-pantothenate: step 1/5. In terms of biological role, catalyzes the phosphorylation of pantothenate (Pan), the first step in CoA biosynthesis. The protein is Type III pantothenate kinase of Nitratidesulfovibrio vulgaris (strain ATCC 29579 / DSM 644 / CCUG 34227 / NCIMB 8303 / VKM B-1760 / Hildenborough) (Desulfovibrio vulgaris).